The sequence spans 718 residues: uncharacterized protein (718 aa).

The next 6 helical transmembrane spans lie at 9–29 (VIST…IWFF), 60–80 (NVFF…LHIG), 83–103 (IQYI…GAVG), 136–156 (VMIL…YLFF), 391–411 (IVVF…GYWI), and 506–526 (LLDT…LWPD).

It belongs to the YccS/YhfK family.

Its subcellular location is the cell membrane. This is an uncharacterized protein from Haemophilus influenzae (strain ATCC 51907 / DSM 11121 / KW20 / Rd).